The primary structure comprises 378 residues: Mannitol-1-phosphate 5-dehydrogenase (378 aa).

An NAD(+)-binding site is contributed by S4–G15.

This sequence belongs to the mannitol dehydrogenase family.

It carries out the reaction D-mannitol 1-phosphate + NAD(+) = beta-D-fructose 6-phosphate + NADH + H(+). The chain is Mannitol-1-phosphate 5-dehydrogenase from Streptococcus pneumoniae (strain Hungary19A-6).